Consider the following 329-residue polypeptide: MEGALAERVGAEPFHRVTPLLESWALSQVAGMPVFLKYENVQIAGSFKIRGIGHFCQQMAKRGCRHLVCSSGGNAGIAAAYSARKLGIPVTIVLPEGTSVQVVRRLEGEGAEVQLTGKVWDEANVKAQELATRDGWVNVSPFDHPLIWEGHASLVRELKESLGTPPGAVVLAVGGGGLLAGVTAGLLEVGWQHVPIVAMETRGAHSFNSALQAGRPVTLPDITSVAKSLGAKTVAARTLECAKECEVLSEVVEDREAVSAVQRFLDDERMLVEPACGAALAAIYSGILWRLQAEGRLSSALASVVVIVCGGNNISSQQLQELKIQLGCS.

Met-1 carries the post-translational modification N-acetylmethionine. The residue at position 48 (Lys-48) is an N6-(pyridoxal phosphate)lysine.

This sequence belongs to the serine/threonine dehydratase family. As to quaternary structure, monomer. Homodimer. It depends on pyridoxal 5'-phosphate as a cofactor. In terms of tissue distribution, abundantly expressed in liver.

The enzyme catalyses L-serine = pyruvate + NH4(+). It carries out the reaction L-threonine = 2-oxobutanoate + NH4(+). The catalysed reaction is L-glutamate = D-glutamate. Functionally, catalyzes the pyridoxal-phosphate-dependent dehydrative deamination of L-threonine and L-serine to ammonia and alpha-ketobutyrate and pyruvate, respectively. Also exhibits racemase activity towards L-glutamate and D-glutamate. The chain is Serine dehydratase-like (Sdsl) from Mus musculus (Mouse).